The sequence spans 76 residues: MNKALFLSLVVLCAAVVFAAEDLQKAKHAPFKLAAPCFCSGKPGRGDLWIFRGTCPGGYGYTSNCYKWPNICCYPH.

The N-terminal stretch at 1-19 (MNKALFLSLVVLCAAVVFA) is a signal peptide. The propeptide occupies 20–33 (AEDLQKAKHAPFKL). Disulfide bonds link Cys-37–Cys-72, Cys-39–Cys-65, and Cys-55–Cys-73.

The protein belongs to the sea anemone type 3 (BDS) potassium channel toxin family. In terms of tissue distribution, experimental results show no expression in the ectodermal tissue from the distal and proximal tentacles, body wall, and oral disk. Since paralogs are expressed in this tissue, an expression of this toxin in this tissue is probable. The negative results could be explained by the very low abundance of EST sequences.

It is found in the secreted. Its subcellular location is the nematocyst. Functionally, blocks Kv3 voltage-gated potassium channels. Reduces blood pressure. This Anemonia viridis (Snakelocks anemone) protein is Kappa-actitoxin-Avd4o.